A 288-amino-acid chain; its full sequence is NAD kinase (288 aa).

The Proton acceptor role is filled by D73. NAD(+) contacts are provided by residues 73 to 74 (DG), R78, 144 to 145 (NE), D174, 185 to 190 (TAYSLS), and A209.

This sequence belongs to the NAD kinase family. A divalent metal cation is required as a cofactor.

The protein resides in the cytoplasm. The enzyme catalyses NAD(+) + ATP = ADP + NADP(+) + H(+). Involved in the regulation of the intracellular balance of NAD and NADP, and is a key enzyme in the biosynthesis of NADP. Catalyzes specifically the phosphorylation on 2'-hydroxyl of the adenosine moiety of NAD to yield NADP. This chain is NAD kinase, found in Porphyromonas gingivalis (strain ATCC BAA-308 / W83).